The primary structure comprises 305 residues: Putative beta-lactamase HcpD (305 aa).

The first 27 residues, 1-27 (MIKSWTKKWFLILFLMASCFGHLVATT), serve as a signal peptide directing secretion. 4 TPR repeats span residues 28–61 (GEKY…RMGV), 96–133 (HLAC…KGGV), 168–205 (GISC…KDGA), and 240–277 (GSGC…GFSG). 7 disulfide bridges follow: C55–C63, C91–C99, C127–C135, C163–C171, C199–C207, C235–C243, and C271–C279.

The protein belongs to the hcp beta-lactamase family.

It is found in the secreted. It carries out the reaction a beta-lactam + H2O = a substituted beta-amino acid. May hydrolyze 6-aminopenicillinic acid and 7-aminocephalosporanic acid (ACA) derivatives. Binds to penicillin. This Helicobacter pylori (strain J99 / ATCC 700824) (Campylobacter pylori J99) protein is Putative beta-lactamase HcpD (hcpD).